Here is a 682-residue protein sequence, read N- to C-terminus: Potassium-transporting ATPase ATP-binding subunit (682 aa).

Helical transmembrane passes span 34-54 (PVMF…IAMA), 62-82 (ALFS…ANFA), 219-239 (IALT…TATL), and 254-274 (VLVA…LSAI). Aspartate 307 acts as the 4-aspartylphosphate intermediate in catalysis. ATP-binding positions include aspartate 344, glutamate 348, 377-384 (FTAQSRMS), and lysine 395. Positions 518 and 522 each coordinate Mg(2+). A run of 3 helical transmembrane segments spans residues 588–608 (FAII…LNIM), 616–636 (AILS…PLAL), and 656–676 (IYGL…DLLL).

It belongs to the cation transport ATPase (P-type) (TC 3.A.3) family. Type IA subfamily. The system is composed of three essential subunits: KdpA, KdpB and KdpC.

It localises to the cell inner membrane. The enzyme catalyses K(+)(out) + ATP + H2O = K(+)(in) + ADP + phosphate + H(+). Its function is as follows. Part of the high-affinity ATP-driven potassium transport (or Kdp) system, which catalyzes the hydrolysis of ATP coupled with the electrogenic transport of potassium into the cytoplasm. This subunit is responsible for energy coupling to the transport system and for the release of the potassium ions to the cytoplasm. The polypeptide is Potassium-transporting ATPase ATP-binding subunit (Escherichia coli O8 (strain IAI1)).